The primary structure comprises 616 residues: GPI mannosyltransferase 3 (616 aa).

Residues 1 to 16 (MAHEVHRIKPKLGRTQ) are Cytoplasmic-facing. A helical transmembrane segment spans residues 17–37 (IFWVFLAFRVLNAVLTRTFFQ). Over 38–86 (ADEFWQALEPAHWKAFKYGELTWEWKFGVRSYLFPMIFELTYRLVSLSS) the chain is Lumenal. Residues 87-107 (ILLHYALLLLSTIGSDLLILL) traverse the membrane as a helical segment. Residues 108–136 (LPKYELSWQVAEDLKRLPFDVTRSFEYYG) lie on the Cytoplasmic side of the membrane. The helical transmembrane segment at 137–157 (VIYAPKIVMAVLASIGEYYIV) threads the bilayer. Over 158–188 (RFVQKLYLLTLDKRNEKEEEERRSGLSEITK) the chain is Lumenal. A helical transmembrane segment spans residues 189-209 (FALLLSLTNFFNCFFITRTFI). Topologically, residues 210-240 (NSFEMILTSIALYYWDWTGGQMIKESSFTKS) are cytoplasmic. A helical membrane pass occupies residues 241–261 (LIFAFLACLQRPSSGLIWVIP). Residues 262 to 278 (SISLILNLVGKKQYHLL) are Lumenal-facing. The chain crosses the membrane as a helical span at residues 279–299 (FITFSKVLRSFFLVFTANAII). The Cytoplasmic portion of the chain corresponds to 300–338 (DMYFYEKVTFPFFRFLKFNFTTPLSKFYGVAPWHFHFFQ). A helical transmembrane segment spans residues 339–359 (SLPIVLGASIPAFAFGLFFPL). Residues 360-392 (SKRSFPKKYLNPFFQVKLTILLNLLVYSTLPHK) lie on the Lumenal side of the membrane. A helical membrane pass occupies residues 393–413 (EFRFIFPLQPLFILISSFGLL). At 414–423 (RLDRDYWKRL) the chain is on the cytoplasmic side. A helical membrane pass occupies residues 424–444 (SGLKSLLWLVPFVSVFIALLL). The Lumenal segment spans residues 445 to 616 (DTFHESGSIE…DYSDIPAADI (172 aa)).

Belongs to the glycosyltransferase 22 family. PIGB subfamily.

It localises to the endoplasmic reticulum membrane. Its pathway is glycolipid biosynthesis; glycosylphosphatidylinositol-anchor biosynthesis. In terms of biological role, mannosyltransferase involved in glycosylphosphatidylinositol-anchor biosynthesis. Transfers the third mannose to Man2-GlcN-acyl-PI during GPI precursor assembly. The chain is GPI mannosyltransferase 3 (GPI10) from Saccharomyces cerevisiae (strain ATCC 204508 / S288c) (Baker's yeast).